The primary structure comprises 1140 residues: uncharacterized protein (1140 aa).

2 consecutive transmembrane segments (helical) span residues Phe-8–Thr-28 and Ile-1098–Val-1118.

To M.pneumoniae MPN_375 (in the N-terminal section), M.pneumoniae MPN_374 (in the central section) and M.pneumoniae MPN_373 (in the C-terminal section).

The protein localises to the cell membrane. This is an uncharacterized protein from Mycoplasma pneumoniae (strain ATCC 29342 / M129 / Subtype 1) (Mycoplasmoides pneumoniae).